A 209-amino-acid polypeptide reads, in one-letter code: Uracil phosphoribosyltransferase (209 aa).

Residues Arg79, Arg104, and 131–139 (DPMLATGGS) each bind 5-phospho-alpha-D-ribose 1-diphosphate. Uracil-binding positions include Ile194 and 199-201 (GDA). Asp200 lines the 5-phospho-alpha-D-ribose 1-diphosphate pocket.

It belongs to the UPRTase family. It depends on Mg(2+) as a cofactor.

It catalyses the reaction UMP + diphosphate = 5-phospho-alpha-D-ribose 1-diphosphate + uracil. It functions in the pathway pyrimidine metabolism; UMP biosynthesis via salvage pathway; UMP from uracil: step 1/1. With respect to regulation, allosterically activated by GTP. Catalyzes the conversion of uracil and 5-phospho-alpha-D-ribose 1-diphosphate (PRPP) to UMP and diphosphate. The chain is Uracil phosphoribosyltransferase from Ligilactobacillus salivarius (strain UCC118) (Lactobacillus salivarius).